We begin with the raw amino-acid sequence, 1022 residues long: Histone-lysine N-methyltransferase TRX1 (1022 aa).

The tract at residues 31 to 151 (SSAPCPLPKK…QRQGVHKEAA (121 aa)) is disordered. The span at 65–78 (EGPPPSPATAPPML) shows a compositional bias: pro residues. The span at 127–139 (GGAERRGYFSEPK) shows a compositional bias: basic and acidic residues. In terms of domain architecture, PWWP spans 264 to 327 (PGDLVWAKLT…LKQAVPFLNG (64 aa)). Positions 367–393 (SMEKGSSDANSNKDVHSCDNLSEDKTA) are enriched in basic and acidic residues. The interval 367–399 (SMEKGSSDANSNKDVHSCDNLSEDKTAESGGDY) is disordered. An FYR N-terminal domain is found at 402–461 (MTPIELGNLRVSKLGRIVTDSDYFHNKKHIWPEGYTAFRKFRSVKDPHVVILYKMEVLRN). The region spanning 465-548 (KARPLFRVTS…SCLKYFENAG (84 aa)) is the FYR C-terminal domain. The Phorbol-ester/DAG-type zinc finger occupies 553–609 (GYRAVHVNWKDLDYCSVCDMDEEYEDNLFLQCDKCRMMVHARCYGELEPLNGVLWLC). PHD-type zinc fingers lie at residues 564 to 615 (LDYC…CRPE) and 677 to 744 (LLCS…KKHR). An extended PHD domain (ePHD) region spans residues 620-744 (SPRCCLCPVT…RLLSYCKKHR (125 aa)). In terms of domain architecture, SET spans 861–979 (RRLAFGKSRI…PWEELTYDYR (119 aa)). Cys943 is a Zn(2+) binding site. Position 978 (Tyr978) interacts with S-adenosyl-L-methionine. The 17-residue stretch at 985–1001 (QRLPCYCGFPKCRGVVN) folds into the Post-SET domain. Residues Cys989, Cys991, and Cys996 each contribute to the Zn(2+) site.

This sequence belongs to the class V-like SAM-binding methyltransferase superfamily. Histone-lysine methyltransferase family. TRX/MLL subfamily. In terms of assembly, interacts with EHD3. Expressed in leaf blades and panicles.

Its subcellular location is the nucleus. It carries out the reaction L-lysyl(4)-[histone H3] + S-adenosyl-L-methionine = N(6)-methyl-L-lysyl(4)-[histone H3] + S-adenosyl-L-homocysteine + H(+). Possesses histone H3 methyltransferase activity in vitro. Methylates 'Lys-4' of histone H3. H3 'Lys-4' methylation represents a specific tag for epigenetic transcriptional activation. Functions as a receptor for the lipid messenger phosphatidylinositol 5-phosphate (PI5P), which negatively regulates its transcriptional activation activity. Involved in the regulation of flowering time and floral induction under long day (LD) conditions. Acts as an activator of flowering under LD conditions. May function through binding to EHD3, a repressor of GHD7. The protein is Histone-lysine N-methyltransferase TRX1 of Oryza sativa subsp. japonica (Rice).